The primary structure comprises 253 residues: Major prion protein (253 aa).

The first 22 residues, 1–22 (MANLGCWMLVLFVATWSNLGLC), serve as a signal peptide directing secretion. The segment at 23 to 38 (KKRPKPGGWNTGGSRY) is interaction with ADGRG6. Residues 23–230 (KKRPKPGGWN…ESQAYYQRGS (208 aa)) are interaction with GRB2, ERI3 and SYN1. The interval 25 to 108 (RPKPGGWNTG…WNKPSKPKTN (84 aa)) is disordered. 5 repeat units span residues 51–59 (PQGGGGWGQ), 60–67 (PHGGGWGQ), 68–75 (PHGGGWGQ), 76–83 (PHGGGWGQ), and 84–91 (PHGGGWGQ). The tract at residues 51 to 91 (PQGGGGWGQPHGGGWGQPHGGGWGQPHGGGWGQPHGGGWGQ) is 5 X 8 AA tandem repeats of P-H-G-G-G-W-G-Q. Positions 52–95 (QGGGGWGQPHGGGWGQPHGGGWGQPHGGGWGQPHGGGWGQGGGT) are enriched in gly residues. Residues His61, Gly62, Gly63, His69, Gly70, Gly71, His77, Gly78, Gly79, His85, Gly86, and Gly87 each coordinate Cu(2+). Cys179 and Cys214 form a disulfide bridge. Asn181 and Asn197 each carry an N-linked (GlcNAc...) asparagine glycan. A lipid anchor (GPI-anchor amidated serine) is attached at Ser230. Positions 231–253 (SMVLFSSPPVILLISFLIFLIVG) are cleaved as a propeptide — removed in mature form.

This sequence belongs to the prion family. As to quaternary structure, monomer and homodimer. Has a tendency to aggregate into amyloid fibrils containing a cross-beta spine, formed by a steric zipper of superposed beta-strands. Soluble oligomers may represent an intermediate stage on the path to fibril formation. Copper binding may promote oligomerization. Interacts with GRB2, APP, ERI3/PRNPIP and SYN1. Mislocalized cytosolically exposed PrP interacts with MGRN1; this interaction alters MGRN1 subcellular location and causes lysosomal enlargement. Interacts with APP. Interacts with KIAA1191. Interacts with ADGRG6.

Its subcellular location is the cell membrane. The protein localises to the golgi apparatus. Functionally, its primary physiological function is unclear. May play a role in neuronal development and synaptic plasticity. May be required for neuronal myelin sheath maintenance. May promote myelin homeostasis through acting as an agonist for ADGRG6 receptor. May play a role in iron uptake and iron homeostasis. Soluble oligomers are toxic to cultured neuroblastoma cells and induce apoptosis (in vitro). Association with GPC1 (via its heparan sulfate chains) targets PRNP to lipid rafts. Also provides Cu(2+) or Zn(2+) for the ascorbate-mediated GPC1 deaminase degradation of its heparan sulfate side chains. This Pongo pygmaeus (Bornean orangutan) protein is Major prion protein (PRNP).